Here is a 217-residue protein sequence, read N- to C-terminus: ATP phosphoribosyltransferase (217 aa).

This sequence belongs to the ATP phosphoribosyltransferase family. Short subfamily. Heteromultimer composed of HisG and HisZ subunits.

It localises to the cytoplasm. The enzyme catalyses 1-(5-phospho-beta-D-ribosyl)-ATP + diphosphate = 5-phospho-alpha-D-ribose 1-diphosphate + ATP. Its pathway is amino-acid biosynthesis; L-histidine biosynthesis; L-histidine from 5-phospho-alpha-D-ribose 1-diphosphate: step 1/9. Functionally, catalyzes the condensation of ATP and 5-phosphoribose 1-diphosphate to form N'-(5'-phosphoribosyl)-ATP (PR-ATP). Has a crucial role in the pathway because the rate of histidine biosynthesis seems to be controlled primarily by regulation of HisG enzymatic activity. This Polaromonas naphthalenivorans (strain CJ2) protein is ATP phosphoribosyltransferase.